An 860-amino-acid polypeptide reads, in one-letter code: Transcription factor E2F8 (860 aa).

A disordered region spans residues 1-114; it reads MENQKENLFS…NEKSQPSRKE (114 aa). S71 bears the Phosphoserine mark. 2 stretches are compositionally biased toward basic and acidic residues: residues 74–84 and 92–114; these read IRSRDQKRGLS and EARD…SRKE. 2 DNA-binding regions span residues 112–181 and 261–347; these read RKEK…TWHG and RKDK…KWTG. Disordered stretches follow at residues 407–433 and 533–616; these read RRKI…PPVP and TPPH…PKED. Over residues 411 to 426 the composition is skewed to low complexity; sequence SSAPSSPVKSSKAESS. Residues S412 and S416 each carry the phosphoserine modification. Residues 542 to 554 show a composition bias toward polar residues; that stretch reads VCPTQSSNATGSK. Composition is skewed to basic and acidic residues over residues 555–565 and 586–596; these read DPTDAPTEKTA and RSKETTGDRGT.

It belongs to the E2F/DP family. In terms of assembly, homodimer and heterodimer: mainly forms homodimers and, to a lesser extent, heterodimers with E2F8. Dimerization is important for DNA-binding. Interacts with HIF1A.

It localises to the nucleus. Functionally, atypical E2F transcription factor that participates in various processes such as angiogenesis and polyploidization of specialized cells. Mainly acts as a transcription repressor that binds DNA independently of DP proteins and specifically recognizes the E2 recognition site 5'-TTTC[CG]CGC-3'. Directly represses transcription of classical E2F transcription factors such as E2F1: component of a feedback loop in S phase by repressing the expression of E2F1, thereby preventing p53/TP53-dependent apoptosis. Plays a key role in polyploidization of cells in placenta and liver by regulating the endocycle, probably by repressing genes promoting cytokinesis and antagonizing action of classical E2F proteins (E2F1, E2F2 and/or E2F3). Required for placental development by promoting polyploidization of trophoblast giant cells. Acts as a promoter of sprouting angiogenesis, possibly by acting as a transcription activator: associates with HIF1A, recognizes and binds the VEGFA promoter, which is different from canonical E2 recognition site, and activates expression of the VEGFA gene. The protein is Transcription factor E2F8 (E2f8) of Rattus norvegicus (Rat).